A 686-amino-acid polypeptide reads, in one-letter code: Myb-related protein B (686 aa).

Positions M1 to G28 are disordered. HTH myb-type domains lie at R26–L77, N78–V133, and K134–V184. DNA-binding regions (H-T-H motif) lie at residues W54–L77, W106–L129, and W157–I180. 2 disordered regions span residues C315 to Y355 and Y493 to Y512. Positions P326–S343 are enriched in low complexity.

In terms of assembly, component of the DREAM complex. As to expression, expressed in hematopoietic and non hematopoietic cells.

Its subcellular location is the nucleus. Represses v-myb- and c-myb-mediated activation of the mim-1 gene, probably by competing with other myb proteins for binding sites. It is an inhibitory member of the myb family. The polypeptide is Myb-related protein B (MYBL2) (Gallus gallus (Chicken)).